The following is a 257-amino-acid chain: Imidazole glycerol phosphate synthase subunit HisF (257 aa).

Active-site residues include Asp11 and Asp130.

Belongs to the HisA/HisF family. As to quaternary structure, heterodimer of HisH and HisF.

The protein resides in the cytoplasm. The catalysed reaction is 5-[(5-phospho-1-deoxy-D-ribulos-1-ylimino)methylamino]-1-(5-phospho-beta-D-ribosyl)imidazole-4-carboxamide + L-glutamine = D-erythro-1-(imidazol-4-yl)glycerol 3-phosphate + 5-amino-1-(5-phospho-beta-D-ribosyl)imidazole-4-carboxamide + L-glutamate + H(+). The protein operates within amino-acid biosynthesis; L-histidine biosynthesis; L-histidine from 5-phospho-alpha-D-ribose 1-diphosphate: step 5/9. In terms of biological role, IGPS catalyzes the conversion of PRFAR and glutamine to IGP, AICAR and glutamate. The HisF subunit catalyzes the cyclization activity that produces IGP and AICAR from PRFAR using the ammonia provided by the HisH subunit. This chain is Imidazole glycerol phosphate synthase subunit HisF, found in Mannheimia succiniciproducens (strain KCTC 0769BP / MBEL55E).